The primary structure comprises 169 residues: Peptide deformylase (169 aa).

Residues Cys94 and His136 each contribute to the Fe cation site. Glu137 is a catalytic residue. Residue His140 participates in Fe cation binding.

This sequence belongs to the polypeptide deformylase family. The cofactor is Fe(2+).

It catalyses the reaction N-terminal N-formyl-L-methionyl-[peptide] + H2O = N-terminal L-methionyl-[peptide] + formate. In terms of biological role, removes the formyl group from the N-terminal Met of newly synthesized proteins. Requires at least a dipeptide for an efficient rate of reaction. N-terminal L-methionine is a prerequisite for activity but the enzyme has broad specificity at other positions. In Phenylobacterium zucineum (strain HLK1), this protein is Peptide deformylase.